Consider the following 129-residue polypeptide: Holo-[acyl-carrier-protein] synthase (129 aa).

Mg(2+)-binding residues include aspartate 8 and glutamate 58.

Belongs to the P-Pant transferase superfamily. AcpS family. The cofactor is Mg(2+).

It localises to the cytoplasm. It carries out the reaction apo-[ACP] + CoA = holo-[ACP] + adenosine 3',5'-bisphosphate + H(+). Transfers the 4'-phosphopantetheine moiety from coenzyme A to a Ser of acyl-carrier-protein. The protein is Holo-[acyl-carrier-protein] synthase of Acidithiobacillus ferrooxidans (strain ATCC 53993 / BNL-5-31) (Leptospirillum ferrooxidans (ATCC 53993)).